A 119-amino-acid polypeptide reads, in one-letter code: Protein GSKIP homolog (119 aa).

Belongs to the GSKIP family.

The sequence is that of Protein GSKIP homolog from Drosophila melanogaster (Fruit fly).